An 896-amino-acid chain; its full sequence is MDSDEPNGSGLPPPPPFVPANLVPEVEPVKKNILLPMARPRGSGSKGQKIPLLTNHFGVKFNKPSGYFFHYSVAINYEDGRPVEAKGIGRKILDKVQETYQSDLGAKYFAYDGEKTLFTVGALPSNKLDFSVVLEEIPSSRNHAGNDTNDADRKRSRRPNQTKKFMVEISYAAKIPMQAIASALQGKETENLQDALRVLDIILRQSAARQGCLLVRQSFFHNDVKNFVPIGGGVSGCRGFHSSFRTTQGGLSLNIDTSTTMIVQPGPVVDFLLANQNKKDPYGMDWNKARRVLKNLRVQITLSNREYKISGLSEHSCKDQLFTWRKPNDKGEFEEVEITVLNYYKERNIEVRYSGDFPCINVGKPKRPTYFPIEFCNLVSLQRYTKSLTNFQRAALVEKSRQKPPERMASLTKGLKDSNYNADPVLQDSGVSIITNFTQVEGRILPTPMLKVGKGENLSPIKGKWNFMRKTLAEPTTVTRWAVVNFSARCDTNTLIRDLIKCGREKGINVEPPFKDVINENPQFRNAPATVRVENMFEQIKSKLPKPPLFLLCILAERKNSDVYGPWKKKNLVDLGIVTQCIAPTRLNDQYLTNVLLKINAKLGGLNSLLAMERSPAMPKVTQVPTIIVGMDVSHGSPGQSDIPSIAAVVSSRQWPLISKYKACVRTQSRKMEMIDNLFKPVNGKDEGMFRELLLDFYYSSENRKPEHIIIFRDGVSESQFNQVLNIELDQMMQACKFLDDTWHPKFTVIVAQKNHHTKFFQSRGPDNVPPGTIIDSQICHPRNFDFYLCAHAGMIGTTRPTHYHVLYDEIGFATDDLQELVHSLSYVYQRSTTAISVVAPVCYAHLAAAQMGTVMKYEELSETSSSHGGITTPGAVPVPPMPQLHNNVSTSMFFC.

The PAZ domain occupies 267 to 380 (PVVDFLLANQ…FPIEFCNLVS (114 aa)). The 308-residue stretch at 550 to 857 (FLLCILAERK…AAAQMGTVMK (308 aa)) folds into the Piwi domain.

It belongs to the argonaute family. Ago subfamily. Expressed in embryonic shoot apex region, pollen and developing ovules.

In terms of biological role, involved in RNA-mediated post-transcriptional gene silencing (PTGS). Main component of the RNA-induced silencing complex (RISC) that binds to a short guide RNA such as a microRNA (miRNA) or small interfering RNA (siRNA). RISC uses the mature miRNA or siRNA as a guide for slicer-directed cleavage of homologous mRNAs to repress gene expression. Associates preferentially with small RNAs of 24 nucleotide in length with a 5' terminal adenosine. Interacts with 24 nucleotide sRNAs derived from transposable elements (TEs). Required to silence pericentrometric-located TEs in female gametes and their accessory cells. Necessary to inactivate a significant proportion of long terminal repeat retrotransposons (LTRs) in the ovule. Required to specify cell fate in ovule. Involved in the control of female gamete formation by restricting the specification of gametophyte precursors in a dosage-dependent, non-cell-autonomous manner. Targeted by turnip yellows virus (TuYV) protein P0 (via F-box-like domain) for probable proteasome degradation and thereby inactivating AGO9 function in RNA silencing. The protein is Protein argonaute 9 (AGO9) of Arabidopsis thaliana (Mouse-ear cress).